Consider the following 225-residue polypeptide: Endonuclease V (225 aa).

Residues Asp43 and Asp110 each contribute to the Mg(2+) site.

This sequence belongs to the endonuclease V family. It depends on Mg(2+) as a cofactor.

Its subcellular location is the cytoplasm. The catalysed reaction is Endonucleolytic cleavage at apurinic or apyrimidinic sites to products with a 5'-phosphate.. DNA repair enzyme involved in the repair of deaminated bases. Selectively cleaves double-stranded DNA at the second phosphodiester bond 3' to a deoxyinosine leaving behind the intact lesion on the nicked DNA. This is Endonuclease V from Thermotoga petrophila (strain ATCC BAA-488 / DSM 13995 / JCM 10881 / RKU-1).